The following is a 190-amino-acid chain: Potassium-transporting ATPase KdpC subunit (190 aa).

Residues 13-33 form a helical membrane-spanning segment; it reads VGFLLLTLVCGVIYPGVVTII.

Belongs to the KdpC family. The system is composed of three essential subunits: KdpA, KdpB and KdpC.

It localises to the cell membrane. Part of the high-affinity ATP-driven potassium transport (or Kdp) system, which catalyzes the hydrolysis of ATP coupled with the electrogenic transport of potassium into the cytoplasm. This subunit acts as a catalytic chaperone that increases the ATP-binding affinity of the ATP-hydrolyzing subunit KdpB by the formation of a transient KdpB/KdpC/ATP ternary complex. The polypeptide is Potassium-transporting ATPase KdpC subunit (Listeria innocua serovar 6a (strain ATCC BAA-680 / CLIP 11262)).